We begin with the raw amino-acid sequence, 77 residues long: NADH dehydrogenase [ubiquinone] 1 alpha subcomplex subunit 3 (77 aa).

Residues Ile-23–Tyr-45 traverse the membrane as a helical segment.

The protein belongs to the complex I NDUFA3 subunit family. In terms of assembly, complex I is composed of 43 different subunits.

It is found in the mitochondrion inner membrane. It localises to the cytoplasm. Its subcellular location is the myofibril. The protein localises to the sarcomere. The protein resides in the z line. In terms of biological role, accessory subunit of the mitochondrial membrane respiratory chain NADH dehydrogenase (Complex I), that is believed not to be involved in catalysis. Complex I functions in the transfer of electrons from NADH to the respiratory chain. The immediate electron acceptor for the enzyme is believed to be ubiquinone. Required for the maintenance of muscle integrity and for cell proliferation in the wing imaginal disc epithelium, possibly by interacting with the chaperone-assisted selective autophagy (CASA) pathway. The chain is NADH dehydrogenase [ubiquinone] 1 alpha subcomplex subunit 3 from Drosophila melanogaster (Fruit fly).